Consider the following 284-residue polypeptide: Bifunctional protein FolD (284 aa).

NADP(+)-binding positions include 166–168 (GAS) and Ile-232.

This sequence belongs to the tetrahydrofolate dehydrogenase/cyclohydrolase family. As to quaternary structure, homodimer.

It carries out the reaction (6R)-5,10-methylene-5,6,7,8-tetrahydrofolate + NADP(+) = (6R)-5,10-methenyltetrahydrofolate + NADPH. The catalysed reaction is (6R)-5,10-methenyltetrahydrofolate + H2O = (6R)-10-formyltetrahydrofolate + H(+). The protein operates within one-carbon metabolism; tetrahydrofolate interconversion. Functionally, catalyzes the oxidation of 5,10-methylenetetrahydrofolate to 5,10-methenyltetrahydrofolate and then the hydrolysis of 5,10-methenyltetrahydrofolate to 10-formyltetrahydrofolate. The sequence is that of Bifunctional protein FolD from Shewanella pealeana (strain ATCC 700345 / ANG-SQ1).